The sequence spans 24 residues: MTPRGFSCLLLPTSETDLPVKRRT.

Belongs to the humanin family. In terms of tissue distribution, expressed in skeletal muscle and testis.

The protein resides in the secreted. It is found in the cytoplasm. Plays a role as a neuroprotective and antiapoptotic factor. The protein is Humanin-like 6 of Homo sapiens (Human).